A 276-amino-acid polypeptide reads, in one-letter code: Mitochondrial outer membrane protein porin 2 (276 aa).

Phosphoserine is present on serine 76. The residue at position 236 (threonine 236) is a Phosphothreonine.

This sequence belongs to the eukaryotic mitochondrial porin (TC 1.B.8.1) family. In terms of tissue distribution, expressed in root tips, steles, leaves, sepals, petals, stamen and pistils.

Its subcellular location is the mitochondrion outer membrane. Functionally, forms a channel through the mitochondrial outer membrane that allows diffusion of small hydrophilic molecules. The channel adopts an open conformation at low or zero membrane potential and a closed conformation at potentials above 30-40 mV. The open state has a weak anion selectivity whereas the closed state is cation-selective. Involved in plant growth and development at the vegetative and reproductive stages. Is important for leaf and pollen development and mitochondrial membrane potential steady state. May be involved in ABA-mediated early seedling development and disease resistance. The protein is Mitochondrial outer membrane protein porin 2 (VDAC2) of Arabidopsis thaliana (Mouse-ear cress).